Consider the following 276-residue polypeptide: Putative translation initiation factor eIF-2B subunit 2-like (276 aa).

Belongs to the eIF-2B alpha/beta/delta subunits family. Complex of two different subunits.

Catalyzes the exchange of initiation factor 2-bound GDP for GTP. In Pyrococcus horikoshii (strain ATCC 700860 / DSM 12428 / JCM 9974 / NBRC 100139 / OT-3), this protein is Putative translation initiation factor eIF-2B subunit 2-like.